We begin with the raw amino-acid sequence, 322 residues long: Ribose-phosphate pyrophosphokinase (322 aa).

ATP-binding positions include 43-45 (DGE) and 102-103 (RQ). The Mg(2+) site is built by histidine 137 and aspartate 177. Lysine 201 is a catalytic residue. D-ribose 5-phosphate contacts are provided by residues arginine 203, aspartate 227, and 231-235 (DTAGT).

This sequence belongs to the ribose-phosphate pyrophosphokinase family. Class I subfamily. Homohexamer. The cofactor is Mg(2+).

It is found in the cytoplasm. It catalyses the reaction D-ribose 5-phosphate + ATP = 5-phospho-alpha-D-ribose 1-diphosphate + AMP + H(+). It functions in the pathway metabolic intermediate biosynthesis; 5-phospho-alpha-D-ribose 1-diphosphate biosynthesis; 5-phospho-alpha-D-ribose 1-diphosphate from D-ribose 5-phosphate (route I): step 1/1. Functionally, involved in the biosynthesis of the central metabolite phospho-alpha-D-ribosyl-1-pyrophosphate (PRPP) via the transfer of pyrophosphoryl group from ATP to 1-hydroxyl of ribose-5-phosphate (Rib-5-P). In Xylella fastidiosa (strain Temecula1 / ATCC 700964), this protein is Ribose-phosphate pyrophosphokinase.